Consider the following 704-residue polypeptide: Protein polyglycylase TTLL10 (704 aa).

3 disordered regions span residues 1 to 32, 46 to 125, and 137 to 170; these read MALHPQAGRPHRDGSEAQAEAAAQDLGRLPSP, GHRA…SVKE, and DADDLEEEEAARLPVTSPDGLLMEGDKQPSPGQG. The span at 93 to 105 shows a compositional bias: basic residues; it reads VSSKRSKRSRIHP. The segment covering 114-125 has biased composition (basic and acidic residues); that stretch reads THEKQMGSSVKE. A TTL domain is found at 169–540; the sequence is QGPFFYIGGT…TCQKSLHSQK (372 aa). ATP is bound by residues Lys-301, 307-308, 350-353, 363-365, and 406-407; these read QG, QRYV, KFD, and TN. Gln-307 is an a protein binding site. Residues Asp-486, Glu-499, and Asn-501 each contribute to the Mg(2+) site. Positions 565-704 are disordered; the sequence is LASSRPLNRL…EQRSTSHRGS (140 aa). 2 stretches are compositionally biased toward pro residues: residues 576-588 and 596-612; these read NPNPNPNPNANPH and HPHPNPHPNANPHPPRP. Low complexity-rich tracts occupy residues 616–629 and 654–667; these read AASSALSSARAAIS and SDSSGSSIAESEPS.

Requires Mg(2+) as cofactor. As to expression, highly expressed in testis. Expressed in brain, heart, kidney, liver, lung, muscle and trachea.

The protein resides in the cytoplasm. It localises to the cytoskeleton. It is found in the cell projection. Its subcellular location is the cilium. The protein localises to the cilium axoneme. It catalyses the reaction (glycyl)(n)-glycyl-L-glutamyl-[protein] + glycine + ATP = (glycyl)(n+1)-glycyl-L-glutamyl-[protein] + ADP + phosphate + H(+). Functionally, polyglycylase which modifies both tubulin and non-tubulin proteins, generating polyglycine side chains of variable lengths on the gamma-carboxyl groups of specific glutamate residues of target proteins. Involved in the elongation step rather than the initiation step of the polyglycylation reaction. Polyglycylates alpha-tubulin and beta-tubulin. Polyglycylates non-tubulin proteins such as nucleosome assembly protein NAP1. In Mus musculus (Mouse), this protein is Protein polyglycylase TTLL10.